Reading from the N-terminus, the 433-residue chain is tRNA(Ile)-lysidine synthase (433 aa).

ATP is bound at residue 37–42 (SGGKDS).

The protein belongs to the tRNA(Ile)-lysidine synthase family.

Its subcellular location is the cytoplasm. The catalysed reaction is cytidine(34) in tRNA(Ile2) + L-lysine + ATP = lysidine(34) in tRNA(Ile2) + AMP + diphosphate + H(+). Its function is as follows. Ligates lysine onto the cytidine present at position 34 of the AUA codon-specific tRNA(Ile) that contains the anticodon CAU, in an ATP-dependent manner. Cytidine is converted to lysidine, thus changing the amino acid specificity of the tRNA from methionine to isoleucine. The sequence is that of tRNA(Ile)-lysidine synthase from Leptospira interrogans serogroup Icterohaemorrhagiae serovar copenhageni (strain Fiocruz L1-130).